Reading from the N-terminus, the 485-residue chain is Pup--protein ligase (485 aa).

Glu-33 serves as a coordination point for Mg(2+). Arg-76 is a binding site for ATP. Tyr-78 contributes to the Mg(2+) binding site. The Proton acceptor role is filled by Asp-80. Glu-86 lines the Mg(2+) pocket. Thr-89 and Trp-451 together coordinate ATP.

Belongs to the Pup ligase/Pup deamidase family. Pup-conjugating enzyme subfamily.

It catalyses the reaction ATP + [prokaryotic ubiquitin-like protein]-L-glutamate + [protein]-L-lysine = ADP + phosphate + N(6)-([prokaryotic ubiquitin-like protein]-gamma-L-glutamyl)-[protein]-L-lysine.. Its pathway is protein degradation; proteasomal Pup-dependent pathway. It participates in protein modification; protein pupylation. Catalyzes the covalent attachment of the prokaryotic ubiquitin-like protein modifier Pup to the proteasomal substrate proteins, thereby targeting them for proteasomal degradation. This tagging system is termed pupylation. The ligation reaction involves the side-chain carboxylate of the C-terminal glutamate of Pup and the side-chain amino group of a substrate lysine. The sequence is that of Pup--protein ligase from Bifidobacterium longum subsp. infantis (strain ATCC 15697 / DSM 20088 / JCM 1222 / NCTC 11817 / S12).